A 502-amino-acid polypeptide reads, in one-letter code: Lanosterol 14-alpha demethylase (502 aa).

Residues 22-42 form a helical membrane-spanning segment; sequence GNLASMLLIACAFTLSLVYLF. C448 serves as a coordination point for heme.

This sequence belongs to the cytochrome P450 family. The cofactor is heme. Post-translationally, ubiquitinated by MARCHF6, leading to proteasomal degradation.

The protein resides in the endoplasmic reticulum membrane. The protein localises to the microsome membrane. The enzyme catalyses a 14alpha-methyl steroid + 3 reduced [NADPH--hemoprotein reductase] + 3 O2 = a Delta(14) steroid + formate + 3 oxidized [NADPH--hemoprotein reductase] + 4 H2O + 4 H(+). The catalysed reaction is lanosterol + 3 reduced [NADPH--hemoprotein reductase] + 3 O2 = 4,4-dimethyl-5alpha-cholesta-8,14,24-trien-3beta-ol + formate + 3 oxidized [NADPH--hemoprotein reductase] + 4 H2O + 4 H(+). It catalyses the reaction 24,25-dihydrolanosterol + 3 reduced [NADPH--hemoprotein reductase] + 3 O2 = 4,4-dimethyl-8,14-cholestadien-3beta-ol + formate + 3 oxidized [NADPH--hemoprotein reductase] + 4 H2O + 4 H(+). It carries out the reaction a 14alpha-methyl steroid + reduced [NADPH--hemoprotein reductase] + O2 = a 14alpha-hydroxymethyl steroid + oxidized [NADPH--hemoprotein reductase] + H2O + H(+). The enzyme catalyses a 14alpha-hydroxymethyl steroid + reduced [NADPH--hemoprotein reductase] + O2 = a 14alpha-formyl steroid + oxidized [NADPH--hemoprotein reductase] + 2 H2O + H(+). The catalysed reaction is a 14alpha-formyl steroid + reduced [NADPH--hemoprotein reductase] + O2 = a Delta(14) steroid + formate + oxidized [NADPH--hemoprotein reductase] + H2O + 2 H(+). It catalyses the reaction lanosterol + reduced [NADPH--hemoprotein reductase] + O2 = 32-hydroxylanosterol + oxidized [NADPH--hemoprotein reductase] + H2O + H(+). It carries out the reaction 32-hydroxylanosterol + reduced [NADPH--hemoprotein reductase] + O2 = 32-oxolanosterol + oxidized [NADPH--hemoprotein reductase] + 2 H2O + H(+). The enzyme catalyses 32-oxolanosterol + reduced [NADPH--hemoprotein reductase] + O2 = 4,4-dimethyl-5alpha-cholesta-8,14,24-trien-3beta-ol + formate + oxidized [NADPH--hemoprotein reductase] + H2O + 2 H(+). The catalysed reaction is 24,25-dihydrolanosterol + reduced [NADPH--hemoprotein reductase] + O2 = 32-hydroxy-24,25-dihydrolanosterol + oxidized [NADPH--hemoprotein reductase] + H2O + H(+). It catalyses the reaction 32-hydroxy-24,25-dihydrolanosterol + reduced [NADPH--hemoprotein reductase] + O2 = 32-oxo-24,25-dihydrolanosterol + oxidized [NADPH--hemoprotein reductase] + 2 H2O + H(+). It carries out the reaction 32-oxo-24,25-dihydrolanosterol + reduced [NADPH--hemoprotein reductase] + O2 = 4,4-dimethyl-8,14-cholestadien-3beta-ol + formate + oxidized [NADPH--hemoprotein reductase] + H2O + 2 H(+). Its pathway is steroid biosynthesis; zymosterol biosynthesis; zymosterol from lanosterol: step 1/6. Its activity is regulated as follows. Inhibited by azalanstat. Inhibited by azole antifungal agents ketoconazole, itraconazole and fluconazole. Sterol 14alpha-demethylase that plays a critical role in the cholesterol biosynthesis pathway, being cholesterol the major sterol component in mammalian membranes as well as a precursor for bile acid and steroid hormone synthesis. Cytochrome P450 monooxygenase that catalyzes the three-step oxidative removal of the 14alpha-methyl group (C-32) of sterols such as lanosterol (lanosta-8,24-dien-3beta-ol) and 24,25-dihydrolanosterol (DHL) in the form of formate, and converts the sterols to 4,4-dimethyl-5alpha-cholesta-8,14,24-trien-3beta-ol and 4,4-dimethyl-8,14-cholestadien-3beta-ol, respectively, which are intermediates of cholesterol biosynthesis. Can also demethylate substrates not intrinsic to mammals, such as eburicol (24-methylene-24,25-dihydrolanosterol), but at a lower rate than DHL. This chain is Lanosterol 14-alpha demethylase, found in Bos taurus (Bovine).